An 86-amino-acid chain; its full sequence is Toxin 3FTx-Dis4 (86 aa).

The first 19 residues, 1 to 19, serve as a signal peptide directing secretion; it reads MKTLLLSLVMVGFMYLVSG. Disulfide bonds link Cys-24–Cys-45, Cys-38–Cys-63, and Cys-79–Cys-84.

The protein belongs to the three-finger toxin family. Ancestral subfamily. As to expression, expressed by the venom gland.

Its subcellular location is the secreted. The protein is Toxin 3FTx-Dis4 of Dispholidus typus (Boomslang).